Here is a 145-residue protein sequence, read N- to C-terminus: MLNPSRFRILAIGKVRKSWIQNGLEVYRKRLPGLSITEIRDGDIKKESRAIISSIKKDELLIALCEEGEKFTSMDFSHWLQNLGSSRIVFAIGGTNGLSQEVKTSADLCISLSALTFPHEMARLILAEQLYRAISIAKGSPYHRE.

S-adenosyl-L-methionine-binding positions include Leu64, Gly93, and 112-117; that span reads LSALTF.

It belongs to the RNA methyltransferase RlmH family. In terms of assembly, homodimer.

It localises to the cytoplasm. The catalysed reaction is pseudouridine(1915) in 23S rRNA + S-adenosyl-L-methionine = N(3)-methylpseudouridine(1915) in 23S rRNA + S-adenosyl-L-homocysteine + H(+). Specifically methylates the pseudouridine at position 1915 (m3Psi1915) in 23S rRNA. The sequence is that of Ribosomal RNA large subunit methyltransferase H from Prochlorococcus marinus (strain SARG / CCMP1375 / SS120).